Here is a 158-residue protein sequence, read N- to C-terminus: Rhombotin-2 (158 aa).

LIM zinc-binding domains lie at 30–89 (CGGC…RLFG) and 94–153 (CASC…EWTK).

As to quaternary structure, interacts with BEX2 and KDM5A. Interacts via its LIM domains with ELF2 and LDB1. Also interacts with basic helix-loop-helix protein TAL1/SCL and can assemble in a complex with LMO2 and TAL1/SCL. As to expression, expressed in early mouse development in central nervous system, lung, kidney, liver and spleen but only very low levels occur in thymus.

The protein resides in the nucleus. In terms of biological role, acts with TAL1/SCL to regulate red blood cell development. Also acts with LDB1 to maintain erythroid precursors in an immature state. The chain is Rhombotin-2 (Lmo2) from Mus musculus (Mouse).